The primary structure comprises 628 residues: Chaperone protein HtpG (628 aa).

Positions 1–340 (MSTETLQKET…SADLPLNVSR (340 aa)) are a; substrate-binding. Positions 341–557 (EILQHSKDIE…EHDLSGNLER (217 aa)) are b. The c stretch occupies residues 558 to 628 (LLKAAGQKTP…FVRRVNAMLA (71 aa)).

This sequence belongs to the heat shock protein 90 family. In terms of assembly, homodimer.

Its subcellular location is the cytoplasm. Molecular chaperone. Has ATPase activity. The polypeptide is Chaperone protein HtpG (Methylobacillus flagellatus (strain ATCC 51484 / DSM 6875 / VKM B-1610 / KT)).